We begin with the raw amino-acid sequence, 600 residues long: Elongation factor 4 (600 aa).

The 183-residue stretch at 4-186 (SKIRNFSIIA…EIVKKIPAPQ (183 aa)) folds into the tr-type G domain. GTP is bound by residues 16–21 (DHGKST) and 133–136 (NKID).

Belongs to the TRAFAC class translation factor GTPase superfamily. Classic translation factor GTPase family. LepA subfamily.

The protein resides in the cell inner membrane. It catalyses the reaction GTP + H2O = GDP + phosphate + H(+). Functionally, required for accurate and efficient protein synthesis under certain stress conditions. May act as a fidelity factor of the translation reaction, by catalyzing a one-codon backward translocation of tRNAs on improperly translocated ribosomes. Back-translocation proceeds from a post-translocation (POST) complex to a pre-translocation (PRE) complex, thus giving elongation factor G a second chance to translocate the tRNAs correctly. Binds to ribosomes in a GTP-dependent manner. The sequence is that of Elongation factor 4 from Trichlorobacter lovleyi (strain ATCC BAA-1151 / DSM 17278 / SZ) (Geobacter lovleyi).